Here is a 116-residue protein sequence, read N- to C-terminus: Non-specific lipid-transfer protein (116 aa).

The signal sequence occupies residues 1–23 (MASMKVVCVALIMCIVIAPMAES). 4 disulfides stabilise this stretch: C27-C74, C37-C51, C52-C97, and C72-C111.

It belongs to the plant LTP family.

Its function is as follows. Plant non-specific lipid-transfer proteins transfer phospholipids as well as galactolipids across membranes. May play a role in wax or cutin deposition in the cell walls of expanding epidermal cells and certain secretory tissues. The chain is Non-specific lipid-transfer protein from Cicer arietinum (Chickpea).